The sequence spans 460 residues: MAISAALILAAGKGTRMKSALVKVLHELAGRPMLGWPLAAAREAGAGQIVIVAGHQADQVQKRFGADAGIRIALQEEQLGTGHAVSCSLDQLDGLSGAVLILCGDTPLLTAATLQRLAAEHAASGAAVTVLTAKLDRPFGYGRIVRDSEGRVRRIVEQKDASPEEQAIDEVNSGIYCMELEFLRSHIGRLGSENAQNEYYLTDLVGIAVAEHAGCSAVVADDPDEIMGVNDRVQLAHAARVLRQRVNLQLMLAGVTLIDPDQTYIDADVQVGNDTIIWPGCVLRGATSIGSGCTLENNVRVSDCVIADRVQLKAGSVLSEAQVAEDVSVGPMAHLRPGSVLQAQVKIGNFVETKKVVMGTGSKASHLTYLGDAEIGSDVNIGCGTITCNYDGRHKHKTVIGDGVFVGSDVQLVAPVTVGANALIAAGTTVTQDVPPDSLAIARTPQVNKTGWCLKKRDNG.

Residues 1–232 (MAISAALILA…PDEIMGVNDR (232 aa)) form a pyrophosphorylase region. UDP-N-acetyl-alpha-D-glucosamine is bound by residues 9–12 (LAAG), lysine 23, glutamine 75, and 80–81 (GT). Aspartate 105 is a Mg(2+) binding site. UDP-N-acetyl-alpha-D-glucosamine contacts are provided by glycine 142, glutamate 157, asparagine 172, and asparagine 230. Mg(2+) is bound at residue asparagine 230. A linker region spans residues 233-253 (VQLAHAARVLRQRVNLQLMLA). Residues 254–460 (GVTLIDPDQT…GWCLKKRDNG (207 aa)) form an N-acetyltransferase region. Positions 336 and 354 each coordinate UDP-N-acetyl-alpha-D-glucosamine. Histidine 366 serves as the catalytic Proton acceptor. Residues tyrosine 369 and asparagine 380 each coordinate UDP-N-acetyl-alpha-D-glucosamine. Residues 389–390 (NY), serine 408, alanine 426, and arginine 443 contribute to the acetyl-CoA site.

In the N-terminal section; belongs to the N-acetylglucosamine-1-phosphate uridyltransferase family. The protein in the C-terminal section; belongs to the transferase hexapeptide repeat family. In terms of assembly, homotrimer. Mg(2+) is required as a cofactor.

The protein localises to the cytoplasm. The enzyme catalyses alpha-D-glucosamine 1-phosphate + acetyl-CoA = N-acetyl-alpha-D-glucosamine 1-phosphate + CoA + H(+). The catalysed reaction is N-acetyl-alpha-D-glucosamine 1-phosphate + UTP + H(+) = UDP-N-acetyl-alpha-D-glucosamine + diphosphate. It functions in the pathway nucleotide-sugar biosynthesis; UDP-N-acetyl-alpha-D-glucosamine biosynthesis; N-acetyl-alpha-D-glucosamine 1-phosphate from alpha-D-glucosamine 6-phosphate (route II): step 2/2. Its pathway is nucleotide-sugar biosynthesis; UDP-N-acetyl-alpha-D-glucosamine biosynthesis; UDP-N-acetyl-alpha-D-glucosamine from N-acetyl-alpha-D-glucosamine 1-phosphate: step 1/1. The protein operates within bacterial outer membrane biogenesis; LPS lipid A biosynthesis. Functionally, catalyzes the last two sequential reactions in the de novo biosynthetic pathway for UDP-N-acetylglucosamine (UDP-GlcNAc). The C-terminal domain catalyzes the transfer of acetyl group from acetyl coenzyme A to glucosamine-1-phosphate (GlcN-1-P) to produce N-acetylglucosamine-1-phosphate (GlcNAc-1-P), which is converted into UDP-GlcNAc by the transfer of uridine 5-monophosphate (from uridine 5-triphosphate), a reaction catalyzed by the N-terminal domain. This is Bifunctional protein GlmU from Trichlorobacter lovleyi (strain ATCC BAA-1151 / DSM 17278 / SZ) (Geobacter lovleyi).